Reading from the N-terminus, the 81-residue chain is UPF0248 protein SSO2687 (81 aa).

The protein belongs to the UPF0248 family.

The sequence is that of UPF0248 protein SSO2687 from Saccharolobus solfataricus (strain ATCC 35092 / DSM 1617 / JCM 11322 / P2) (Sulfolobus solfataricus).